A 90-amino-acid polypeptide reads, in one-letter code: Conotoxin TxMMSK-06 (90 aa).

Residues 1 to 22 (MMSKLGVLLTICLLLFPHTAVP) form the signal peptide. A propeptide spanning residues 23–74 (LDGDQHADQPAERLQDDISSEHHPMLNSIRRREQNQFMSFTSVKLRDSRGER) is cleaved from the precursor. A disordered region spans residues 24 to 43 (DGDQHADQPAERLQDDISSE). Over residues 25–43 (GDQHADQPAERLQDDISSE) the composition is skewed to basic and acidic residues. Intrachain disulfides connect cysteine 75–cysteine 89, cysteine 76–cysteine 85, and cysteine 81–cysteine 88. Residue proline 87 is modified to 4-hydroxyproline. Cysteine 89 is modified (cysteine amide).

Belongs to the conotoxin M superfamily. Expressed by the venom duct.

The protein resides in the secreted. This is Conotoxin TxMMSK-06 from Conus textile (Cloth-of-gold cone).